Reading from the N-terminus, the 416-residue chain is MQAEIIAVGTEILLGQIVDTNSAFIARELAEAGIEVYYHSLVGDNATRLTAVVEQARSRSDLVIISGGLGPTKDDLTKQTVAHLLGVKLVEDALAMAKIRRRFAINGREMTPNNRLQALYPAGSQPLANRTGLAVGAFYQDPDGADIMLLPGPPSETEPMFREQALPLLKQTYPRSEYLSSRVLRFFGIGESQLVTQLSDLIDQQTNPTIAPYAKVNEVTLRLTAQAPDEMQGQRLLDDLTATIKARVGDYLYGYGDDNSLAAVVVQTLIDRQLTITAAESLTAGQFQSTLGSVPGVSAVFPGGFVTYAASAKHDLLGVSQATIDQDGVVSAATAKEMASRSRERLDTDFSLSFTGVAGPDALEGQPAGTVWLGLAQRGQQPQAKLLHLTGTRSAIRERSVLTGLDWLRRTLQKVK.

Belongs to the CinA family.

The chain is Putative competence-damage inducible protein from Levilactobacillus brevis (strain ATCC 367 / BCRC 12310 / CIP 105137 / JCM 1170 / LMG 11437 / NCIMB 947 / NCTC 947) (Lactobacillus brevis).